The sequence spans 482 residues: tRNA sulfurtransferase (482 aa).

The region spanning 61 to 165 is the THUMP domain; it reads LTIRDALTRI…DDRLLLIKGR (105 aa). Residues 183-184, K265, G287, and Q296 contribute to the ATP site; that span reads LI. Cysteines 344 and 456 form a disulfide. In terms of domain architecture, Rhodanese spans 404–482; the sequence is FGPNDVILDI…GFNNVKVYRP (79 aa). C456 acts as the Cysteine persulfide intermediate in catalysis.

The protein belongs to the ThiI family.

It localises to the cytoplasm. It carries out the reaction [ThiI sulfur-carrier protein]-S-sulfanyl-L-cysteine + a uridine in tRNA + 2 reduced [2Fe-2S]-[ferredoxin] + ATP + H(+) = [ThiI sulfur-carrier protein]-L-cysteine + a 4-thiouridine in tRNA + 2 oxidized [2Fe-2S]-[ferredoxin] + AMP + diphosphate. The catalysed reaction is [ThiS sulfur-carrier protein]-C-terminal Gly-Gly-AMP + S-sulfanyl-L-cysteinyl-[cysteine desulfurase] + AH2 = [ThiS sulfur-carrier protein]-C-terminal-Gly-aminoethanethioate + L-cysteinyl-[cysteine desulfurase] + A + AMP + 2 H(+). It functions in the pathway cofactor biosynthesis; thiamine diphosphate biosynthesis. Catalyzes the ATP-dependent transfer of a sulfur to tRNA to produce 4-thiouridine in position 8 of tRNAs, which functions as a near-UV photosensor. Also catalyzes the transfer of sulfur to the sulfur carrier protein ThiS, forming ThiS-thiocarboxylate. This is a step in the synthesis of thiazole, in the thiamine biosynthesis pathway. The sulfur is donated as persulfide by IscS. In Shigella flexneri, this protein is tRNA sulfurtransferase.